Here is a 1034-residue protein sequence, read N- to C-terminus: N-acetyl-beta-glucosaminyl-glycoprotein 4-beta-N-acetylgalactosaminyltransferase 1 (1034 aa).

The Cytoplasmic portion of the chain corresponds to 1–12; it reads MPWFPVKKVRKQ. Residues 13-31 form a helical; Signal-anchor for type II membrane protein membrane-spanning segment; that stretch reads MKLLLLLLLLTCAAWLTYV. Over 32–1034 the chain is Lumenal; the sequence is HRSLVRPGRA…SRKGARAQRS (1003 aa). Residues 51-104 form a disordered region; sequence DGEKLTGVTDSRGVRVPSSTQRSEDSSESHEEEQAPEGRGPNMLFPGGPRKPPP. Residues 72 to 83 are compositionally biased toward basic and acidic residues; that stretch reads RSEDSSESHEEE. A glycan (N-linked (GlcNAc...) asparagine) is linked at Asn-106. The PA14 domain occupies 109-279; it reads HQTPPWREEF…LKFEIIDSAH (171 aa). 2 disordered regions span residues 450–486 and 556–600; these read PTDA…DEQT and RVQL…QLHG. The span at 461-473 shows a compositional bias: low complexity; sequence TPTPAASTGTTAS. N-linked (GlcNAc...) asparagine glycosylation is present at Asn-611. Disordered regions lie at residues 626–669 and 782–801; these read SQVS…PLGR and GDED…HPDS. The segment covering 636–661 has biased composition (acidic residues); the sequence is EGEEGEEDGAPGDEATSEDSEEEEEP.

This sequence belongs to the chondroitin N-acetylgalactosaminyltransferase family.

Its subcellular location is the golgi apparatus. It is found in the golgi stack membrane. It catalyses the reaction an N-acetyl-beta-D-glucosaminyl derivative + UDP-N-acetyl-alpha-D-galactosamine = an N-acetyl-beta-D-galactosaminyl-(1-&gt;4)-N-acetyl-beta-D-glucosaminyl derivative + UDP + H(+). Its function is as follows. Transfers N-acetylgalactosamine (GalNAc) from UDP-GalNAc to N-acetylglucosamine-beta-benzyl with a beta-1,4-linkage to form N,N'-diacetyllactosediamine, GalNAc-beta-1,4-GlcNAc structures in N-linked glycans and probably O-linked glycans. The polypeptide is N-acetyl-beta-glucosaminyl-glycoprotein 4-beta-N-acetylgalactosaminyltransferase 1 (B4galnt4) (Mus musculus (Mouse)).